Consider the following 102-residue polypeptide: Monothiol glutaredoxin-S6 (102 aa).

Residues 1–101 (MESVRSLVED…AMLRRAGAIW (101 aa)) enclose the Glutaredoxin domain. C21 contacts [2Fe-2S] cluster.

It belongs to the glutaredoxin family. CC-type subfamily.

The protein localises to the cytoplasm. In terms of biological role, may only reduce GSH-thiol disulfides, but not protein disulfides. This is Monothiol glutaredoxin-S6 (GRXS6) from Arabidopsis thaliana (Mouse-ear cress).